A 75-amino-acid chain; its full sequence is Dermaseptin-SP4 (75 aa).

The N-terminal stretch at 1–22 (MAFLKKSLFLVLFLGLVSLSMC) is a signal peptide. A propeptide spanning residues 23–45 (EEEKRENEVEEEQEDDEQSELRR) is cleaved from the precursor. Proline amide is present on Pro72. A propeptide spanning residues 74-75 (EQ) is cleaved from the precursor.

Belongs to the frog skin active peptide (FSAP) family. Dermaseptin subfamily. In terms of tissue distribution, expressed by the skin glands.

The protein resides in the secreted. The protein localises to the target cell membrane. Functionally, antimicrobial peptide with activity against Gram-positive and Gram-negative bacteria and fungi. Has been tested against E.coli (MIC=47.25-128 uM), S.aureus (MIC=189-512 uM), K.pneumoniae (MIC=189 uM) and C.albicans (MIC&gt;189 uM). Probably acts by disturbing membrane functions with its alpha-helical amphipathic structure. May penetrate bacterial membranes, but stay at the mammalian membrane surface. Shows a weak hemolytic activity. In Agalychnis spurrelli (Gliding leaf frog), this protein is Dermaseptin-SP4.